The primary structure comprises 568 residues: Proline--tRNA ligase (568 aa).

It belongs to the class-II aminoacyl-tRNA synthetase family. ProS type 1 subfamily. Homodimer.

Its subcellular location is the cytoplasm. The enzyme catalyses tRNA(Pro) + L-proline + ATP = L-prolyl-tRNA(Pro) + AMP + diphosphate. In terms of biological role, catalyzes the attachment of proline to tRNA(Pro) in a two-step reaction: proline is first activated by ATP to form Pro-AMP and then transferred to the acceptor end of tRNA(Pro). As ProRS can inadvertently accommodate and process non-cognate amino acids such as alanine and cysteine, to avoid such errors it has two additional distinct editing activities against alanine. One activity is designated as 'pretransfer' editing and involves the tRNA(Pro)-independent hydrolysis of activated Ala-AMP. The other activity is designated 'posttransfer' editing and involves deacylation of mischarged Ala-tRNA(Pro). The misacylated Cys-tRNA(Pro) is not edited by ProRS. The protein is Proline--tRNA ligase of Nitrosomonas eutropha (strain DSM 101675 / C91 / Nm57).